A 714-amino-acid polypeptide reads, in one-letter code: Rho-GTPase-activating protein RGD2 (714 aa).

The region spanning 2–441 is the F-BAR domain; sequence LSFCDYFWSE…LENDIDPTAD (440 aa). The DEP domain occupies 218-298; the sequence is PKTDYKLPLI…WKNTAYMFAN (81 aa). Residues 475–704 form the Rho-GAP domain; that stretch reads VDLETRCRLD…DLLTHKKQIF (230 aa).

Interacts with CDC42 and RHO5.

In terms of biological role, acts in signal transduction. Activates CDC42 and RHO5. This chain is Rho-GTPase-activating protein RGD2 (RGD2), found in Saccharomyces cerevisiae (strain ATCC 204508 / S288c) (Baker's yeast).